We begin with the raw amino-acid sequence, 185 residues long: Small ribosomal subunit protein bS6 (185 aa).

Basic and acidic residues predominate over residues A115 to K141. Residues A115 to A185 are disordered. Positions A142–A169 are enriched in low complexity. The span at P170 to A185 shows a compositional bias: acidic residues.

It belongs to the bacterial ribosomal protein bS6 family.

In terms of biological role, binds together with bS18 to 16S ribosomal RNA. The polypeptide is Small ribosomal subunit protein bS6 (Desulfatibacillum aliphaticivorans).